A 540-amino-acid chain; its full sequence is MVVSLSFPEETGGENLPSAPLEDSSKFFEEVFGDMVFARSFPEADPALSSPDAPELHQDEAQVVEELTTNGKHSLSWESPQGPGCGLQNTGNSCYLNAALQCLTHTPPLADYMLSQEHSQTCCSPEGCKMCAMEAHVTQSLLHSHSGDVMKPSQILTSAFHKHQQEDAHEFLMFTLETMHESCLQVHRQSDPTPQDTSPIHDIFGGWWRSQIKCLHCQGTSHTFDPFLDVPLDISSAQSVNQALWDTGKSEELLGENAYYCGRCRQKMPASKTLHVHIAPKVLLLVLKRFSAFTGNKLDRKVSYPEFLDLKPYLSEPTGGPLPYALYAVLVHDGATSNSGHYFCCVKAGHGKWYKMDDTKVTRCDVTSVLNENAYVLFYVQQTDLKQVSIDMPEGRVHEVLDPKYQLKKSRRKKRKKQCHCTDDAGEACENREKRAKKETSLGEGKVPQEVNHEKAGQKHGNTKLVPQEQNHQRAGQNLRNTEVELDLPVDAIVIHQPRSTANWGTDAPDKENQPWHNGDRLLTSQGLMSPGQLCSQGGR.

Residues M1–E22 form a disordered region. Residues C85 to Q382 enclose the USP domain. The active-site Nucleophile is the C94. The active-site Proton acceptor is H341. 2 stretches are compositionally biased toward basic and acidic residues: residues N431 to S441 and A508 to D520. Disordered regions lie at residues N431–G461 and R499–R540. The segment covering L523–R540 has biased composition (polar residues).

This sequence belongs to the peptidase C19 family. USP17 subfamily. Interacts with SUDS3; the interaction is direct.

The protein localises to the nucleus. It is found in the endoplasmic reticulum. It catalyses the reaction Thiol-dependent hydrolysis of ester, thioester, amide, peptide and isopeptide bonds formed by the C-terminal Gly of ubiquitin (a 76-residue protein attached to proteins as an intracellular targeting signal).. Functionally, deubiquitinating enzyme that removes conjugated ubiquitin from specific proteins to regulate different cellular processes that may include cell proliferation, progression through the cell cycle, apoptosis, cell migration, and the cellular response to viral infection. The sequence is that of Ubiquitin carboxyl-terminal hydrolase 17-like protein E (Usp17le) from Mus musculus (Mouse).